The sequence spans 104 residues: MNLQDVILTPVVTEKSQDLETIGANSKKGTRMVKYTVKVHVDANKTLIKEAFKKIFKVTPSSVNVQVYRGKIKRFRNMPAPRPHWKKAVVTFRDGASIDFAKEA.

It belongs to the universal ribosomal protein uL23 family. Part of the 50S ribosomal subunit. Contacts protein L29, and trigger factor when it is bound to the ribosome.

In terms of biological role, one of the early assembly proteins it binds 23S rRNA. One of the proteins that surrounds the polypeptide exit tunnel on the outside of the ribosome. Forms the main docking site for trigger factor binding to the ribosome. The polypeptide is Large ribosomal subunit protein uL23 (Leptospira borgpetersenii serovar Hardjo-bovis (strain JB197)).